Reading from the N-terminus, the 1330-residue chain is Nephrocystin-3 (1330 aa).

Gly-2 is lipidated: N-myristoyl glycine. Residues 83–207 (ELEYAAAEYE…QRLQAQGIQV (125 aa)) are a coiled coil. 11 TPR repeats span residues 471–504 (IPEE…AHEL), 885–918 (CLLN…KSAM), 920–942 (TEYF…MSCL), 943–976 (ADLY…RETA), 985–1018 (AQSL…SENA), 1027–1060 (AREL…HQKA), 1093–1126 (ARTL…RERV), 1135–1168 (AQSL…RRRA), 1177–1210 (AYTV…RQKS), 1219–1252 (ATAL…YEDS), and 1261–1294 (GETL…KEAE). The interval 1296–1330 (SLLGGKAPSRHSSSGDTFSLKTAHSPNVFLQQGQR) is disordered. Polar residues predominate over residues 1305 to 1330 (RHSSSGDTFSLKTAHSPNVFLQQGQR).

In terms of assembly, interacts with NPHP1 and INVS/NPHP2. Interacts (when myristoylated) with UNC119 and UNC119B; interaction is required for localization to cilium. Interacts with CEP164. Component of a complex containing at least ANKS6, INVS, NEK8 and NPHP3. ANKS6 may organize complex assembly by linking INVS and NPHP3 to NEK8 and INVS may target the complex to the proximal ciliary axoneme. In terms of tissue distribution, widely expressed at low level. Expressed in heart, placenta, liver, skeletal muscle, kidney and pancreas. Expressed at very low level in brain and lung.

The protein localises to the cell projection. The protein resides in the cilium. In terms of biological role, required for normal ciliary development and function. Inhibits disheveled-1-induced canonical Wnt-signaling activity and may also play a role in the control of non-canonical Wnt signaling which regulates planar cell polarity. Probably acts as a molecular switch between different Wnt signaling pathways. Required for proper convergent extension cell movements. This chain is Nephrocystin-3 (NPHP3), found in Homo sapiens (Human).